The primary structure comprises 370 residues: MANLNQKKYPAKDDFPNFEGHKSLLSKYLTADMYAKLRDVATPSGYTLDRAIQNGVDNPDFHLGLLAGDEETYTVFADLFDPVIEEYHNGFKKTDNHKTDLDASKILDDVLDPAYVISSRVRTGRNIRGMALSPHVCRSERRAIEKMVSEALNSLAADLKGKYYSLMKMDEKTQQQLIDDHFLFDRPVSRHFTSGGMARDFPDGRGIWHNDKKNFLVWINEEDHTRIISMQMGGNMKEVFERFTRGLTEVEKHIKDKTGKEFMKNDHLGFVLTCPSNLGTGVRCSVHAKLPHMAKDKRFEEICTKMRLQKRGTSGEFTESVGGVYDISNLDRLGSSEVEQVNCVIKGVKVLIEMEKKLEKGESIDDLVPK.

Residues 6–89 enclose the Phosphagen kinase N-terminal domain; sequence QKKYPAKDDF…FDPVIEEYHN (84 aa). The Phosphagen kinase C-terminal domain occupies 115–358; the sequence is YVISSRVRTG…KVLIEMEKKL (244 aa). Residues 118-122 and histidine 181 contribute to the ATP site; that span reads SSRVR. Glutamate 222 contributes to the substrate binding site. Arginine 226 is a binding site for ATP. Cysteine 274 serves as a coordination point for substrate. ATP contacts are provided by residues 283–287 and 311–316; these read RCSVH and RGTSGE. Substrate is bound at residue glutamate 316.

Belongs to the ATP:guanido phosphotransferase family. Homodimer. In terms of processing, the N-terminus is blocked.

The catalysed reaction is L-arginine + ATP = N(omega)-phospho-L-arginine + ADP + H(+). This Stichopus japonicus (Sea cucumber) protein is Arginine kinase (AK).